Here is a 260-residue protein sequence, read N- to C-terminus: MTFPYYASVEQLMRDRSELARKGISRGRSVVALTYTDGVLFVAENPSNSLQKVSEVYDRVGFAAVGKFNEFDRLRRGGIQWADMRGYAYDRRDVSGRQLANIYAEALGTIFNEQAKPYEVELCVGEVAHYGRDTEPVLYRITYDGSIADEPHWVVMGGNTEPVINSLKESYVEDSALKDAVGFAVKALQAGTAGANGSEGRALGGLEVAVLEQSRPRRAFRRIKGAALEALLPEDFSPGQTEGGGDPAPESGDSKDAKDN.

Residues 231–260 (LLPEDFSPGQTEGGGDPAPESGDSKDAKDN) form a disordered region.

The protein belongs to the peptidase T1A family. As to quaternary structure, the 20S proteasome core is composed of 14 alpha and 14 beta subunits that assemble into four stacked heptameric rings, resulting in a barrel-shaped structure. The two inner rings, each composed of seven catalytic beta subunits, are sandwiched by two outer rings, each composed of seven alpha subunits. The catalytic chamber with the active sites is on the inside of the barrel. Has a gated structure, the ends of the cylinder being occluded by the N-termini of the alpha-subunits. Is capped by the proteasome-associated ATPase, ARC.

The protein localises to the cytoplasm. It functions in the pathway protein degradation; proteasomal Pup-dependent pathway. The formation of the proteasomal ATPase ARC-20S proteasome complex, likely via the docking of the C-termini of ARC into the intersubunit pockets in the alpha-rings, may trigger opening of the gate for substrate entry. Interconversion between the open-gate and close-gate conformations leads to a dynamic regulation of the 20S proteasome proteolysis activity. Its function is as follows. Component of the proteasome core, a large protease complex with broad specificity involved in protein degradation. The sequence is that of Proteasome subunit alpha from Mycobacteroides abscessus (strain ATCC 19977 / DSM 44196 / CCUG 20993 / CIP 104536 / JCM 13569 / NCTC 13031 / TMC 1543 / L948) (Mycobacterium abscessus).